The chain runs to 189 residues: MINTQDSSILPLSKCPQLQCCRHIVPGPLWCSDAPHPLSKIPGGRGGGRDPSLSALIYKDEKLTVTQDLPVNDGKPHIVHFQYEVTEVKVSSWDAVLSSQSLFVEIPDGLLADGSKEGLLALLEFAEEKMKVNYVFICFRKGREDRAPLLKTFSFLGFEIVRPGHPCVPSRPDVMFMVYPLDQNLSDED.

Ser-186 carries the phosphoserine modification.

It belongs to the ODC antizyme family. Interacts with ODC1 and thereby sterically blocks ODC homodimerization. Interacts with AZIN2; this interaction disrupts the interaction between the antizyme and ODC1.

Its subcellular location is the nucleus. In terms of biological role, ornithine decarboxylase (ODC) antizyme protein that negatively regulates ODC activity and intracellular polyamine biosynthesis and uptake in response to increased intracellular polyamine levels. Binds to ODC monomers, inhibiting the assembly of the functional ODC homodimers. Does not target the ODC monomers for degradation, which allows a protein synthesis-independent restoration of ODC activity. Involved in the translocation of AZIN2 from ER-Golgi intermediate compartment (ERGIC) to the cytosol. In Mus musculus (Mouse), this protein is Ornithine decarboxylase antizyme 2 (Oaz2).